A 790-amino-acid chain; its full sequence is Eukaryotic translation initiation factor 3 subunit C (790 aa).

The tract at residues 1-62 (MSRFFVSGYN…DGRPSGPAYF (62 aa)) is disordered. Over residues 14–53 (SSEEEDLLSSEEELLTSSGEENEDSDFFNDDDESSSDEED) the composition is skewed to acidic residues. Positions 556–728 (FHQHINLELL…IVFTTDSQRS (173 aa)) constitute a PCI domain. The interval 748–790 (NEKTSSNGYAKKNQSQTQPQAQSKEVEENKFRYANVNTNTDEF) is disordered. Positions 751–770 (TSSNGYAKKNQSQTQPQAQS) are enriched in polar residues.

This sequence belongs to the eIF-3 subunit C family. As to quaternary structure, component of the eukaryotic translation initiation factor 3 (eIF-3) complex.

The protein localises to the cytoplasm. In terms of biological role, component of the eukaryotic translation initiation factor 3 (eIF-3) complex, which is involved in protein synthesis of a specialized repertoire of mRNAs and, together with other initiation factors, stimulates binding of mRNA and methionyl-tRNAi to the 40S ribosome. The eIF-3 complex specifically targets and initiates translation of a subset of mRNAs involved in cell proliferation. The protein is Eukaryotic translation initiation factor 3 subunit C of Lodderomyces elongisporus (strain ATCC 11503 / CBS 2605 / JCM 1781 / NBRC 1676 / NRRL YB-4239) (Yeast).